Here is a 357-residue protein sequence, read N- to C-terminus: Phosphoribosylformylglycinamidine cyclo-ligase (357 aa).

Belongs to the AIR synthase family.

Its subcellular location is the cytoplasm. The enzyme catalyses 2-formamido-N(1)-(5-O-phospho-beta-D-ribosyl)acetamidine + ATP = 5-amino-1-(5-phospho-beta-D-ribosyl)imidazole + ADP + phosphate + H(+). The protein operates within purine metabolism; IMP biosynthesis via de novo pathway; 5-amino-1-(5-phospho-D-ribosyl)imidazole from N(2)-formyl-N(1)-(5-phospho-D-ribosyl)glycinamide: step 2/2. The sequence is that of Phosphoribosylformylglycinamidine cyclo-ligase from Rhizobium rhizogenes (strain K84 / ATCC BAA-868) (Agrobacterium radiobacter).